The primary structure comprises 416 residues: Gamma-glutamyl phosphate reductase (416 aa).

This sequence belongs to the gamma-glutamyl phosphate reductase family.

Its subcellular location is the cytoplasm. It carries out the reaction L-glutamate 5-semialdehyde + phosphate + NADP(+) = L-glutamyl 5-phosphate + NADPH + H(+). It functions in the pathway amino-acid biosynthesis; L-proline biosynthesis; L-glutamate 5-semialdehyde from L-glutamate: step 2/2. Catalyzes the NADPH-dependent reduction of L-glutamate 5-phosphate into L-glutamate 5-semialdehyde and phosphate. The product spontaneously undergoes cyclization to form 1-pyrroline-5-carboxylate. The polypeptide is Gamma-glutamyl phosphate reductase (Salmonella schwarzengrund (strain CVM19633)).